The primary structure comprises 286 residues: MESAVSEPGLLEAIWRDFVLGVVQGLTEFLPISSTAHLKIVPVLAGWGDPGVSVTAVIQLGSIVAVIAYFRADLAAVLRGISGAVRRGQWREPEARLGIAMTIGTLPILFAGLAIKLYWPGYETSPLRSVPAIAGVSILMALLLALAERFGPRSKQLDQVQGRDGLLVGLAQVLALIPGVSRSGSTLTASLFDSWKRPDAARFSFLLGIPAITIAGLVELKDAFTEPSAGGVLPLMVGIVSAAVVSWLAIDWLLKFLQRHSTWVFVIYRLLFGILLLAWWAGSGSN.

7 consecutive transmembrane segments (helical) span residues 50–70 (PGVSVTAVIQLGSIVAVIAYF), 97–117 (LGIAMTIGTLPILFAGLAIKL), 127–147 (LRSVPAIAGVSILMALLLALA), 165–185 (GLLVGLAQVLALIPGVSRSGS), 200–220 (AARFSFLLGIPAITIAGLVEL), 230–250 (GGVLPLMVGIVSAAVVSWLAI), and 262–282 (TWVFVIYRLLFGILLLAWWAG).

The protein belongs to the UppP family.

It localises to the cell inner membrane. It catalyses the reaction di-trans,octa-cis-undecaprenyl diphosphate + H2O = di-trans,octa-cis-undecaprenyl phosphate + phosphate + H(+). Catalyzes the dephosphorylation of undecaprenyl diphosphate (UPP). Confers resistance to bacitracin. This is Undecaprenyl-diphosphatase from Synechococcus sp. (strain WH7803).